Consider the following 116-residue polypeptide: uncharacterized protein (116 aa).

A helical transmembrane segment spans residues leucine 5–phenylalanine 23.

The protein resides in the membrane. This is an uncharacterized protein from Saccharomyces cerevisiae (strain ATCC 204508 / S288c) (Baker's yeast).